Consider the following 332-residue polypeptide: Ribosomal RNA small subunit methyltransferase C (332 aa).

Belongs to the methyltransferase superfamily. RsmC family. Monomer.

It is found in the cytoplasm. The enzyme catalyses guanosine(1207) in 16S rRNA + S-adenosyl-L-methionine = N(2)-methylguanosine(1207) in 16S rRNA + S-adenosyl-L-homocysteine + H(+). Functionally, specifically methylates the guanine in position 1207 of 16S rRNA in the 30S particle. This chain is Ribosomal RNA small subunit methyltransferase C, found in Pseudomonas syringae pv. syringae (strain B728a).